The sequence spans 255 residues: Pimeloyl-[acyl-carrier protein] methyl ester esterase (255 aa).

Substrate contacts are provided by residues Trp-18, 78–79 (SL), and 139–143 (FLALD). Ser-78 acts as the Nucleophile in catalysis. Residues Asp-203 and His-233 contribute to the active site. His-233 contributes to the substrate binding site.

This sequence belongs to the AB hydrolase superfamily. Carboxylesterase BioH family. In terms of assembly, monomer.

It localises to the cytoplasm. It catalyses the reaction 6-carboxyhexanoyl-[ACP] methyl ester + H2O = 6-carboxyhexanoyl-[ACP] + methanol + H(+). Its pathway is cofactor biosynthesis; biotin biosynthesis. The physiological role of BioH is to remove the methyl group introduced by BioC when the pimeloyl moiety is complete. It allows to synthesize pimeloyl-ACP via the fatty acid synthetic pathway through the hydrolysis of the ester bonds of pimeloyl-ACP esters. This is Pimeloyl-[acyl-carrier protein] methyl ester esterase from Xylella fastidiosa (strain M23).